The primary structure comprises 306 residues: MNQHFHRGILFYHQAAGQGNLYKSLGQVTESLTQMCDDLTLKLSEEGGDIAKFCDDLTQNQNGVSYDVFFVLGGDGTVNELVNGVARNNLEIPIGIIPGGTFNDFTKTLNLSPRTAAAANELLNSKIKSFDVLKVNDTYALNFAGIGMMVQNSENVDANKKRILGKFSYVFTTLKVIANPKIYQYTIKANNEEYSGETSMILIANGNYVGGSKIPLEDLSPSDGEMNIFVFKNHNMSLIKDFFQVKDSLRWNDITENIRLITTDEMKLETRPSTKIDIDGEIMFDTPVDIKLLKDKVKLLYIDVNE.

A DAGKc domain is found at 3 to 139 (QHFHRGILFY…FDVLKVNDTY (137 aa)). Residues S44, 74–80 (GDGTVNE), and T101 contribute to the ATP site. Residues S220, D223, and E225 each coordinate Mg(2+). E281 (proton acceptor) is an active-site residue.

It belongs to the diacylglycerol/lipid kinase family. The cofactor is Mg(2+).

Functionally, may catalyze the ATP-dependent phosphorylation of lipids other than diacylglycerol (DAG). This chain is Putative lipid kinase Sca_1050, found in Staphylococcus carnosus (strain TM300).